Here is a 313-residue protein sequence, read N- to C-terminus: WD repeat-containing protein 82 (313 aa).

WD repeat units follow at residues 19-58 (ENSDKINCFDFSPTGETVISSSDDDSIVLYDCQEGKPKRT), 105-144 (GHSKRVVALSMSPVDDTFISGSLDKTIRLWDLRSPNCQGL), 146-184 (HLQGKPVCSFDPEGLIFAAGVNSEMVKLYDLRSFDKGPF), 192-231 (DRTCEWTALKFSNDGKLILMSTNGGFLRLVDAFKGAVMHT), 236-276 (NNSK…KVAV), and 280-313 (KHTGPITCLQFNPKFMTFTSACSNMAFWLPTIDD).

This sequence belongs to the WD repeat SWD2 family. As to quaternary structure, component of the SET1/COMPASS complex. Component of the PNUTS-PP1 phosphatase complex.

It is found in the nucleus. Its subcellular location is the chromosome. The protein localises to the cytoplasm. In terms of biological role, regulatory component of the SET1/COMPASS complex implicated in the tethering of this complex to transcriptional start sites of active genes. Facilitates histone H3 'Lys-4' methylation (H3K4me) via recruitment of the SETD1A or SETD1B to the 'Ser-5' phosphorylated C-terminal domain (CTD) of RNA polymerase II large subunit (POLR2A). Component of the PNUTS-PP1 protein phosphatase complex, a protein phosphatase 1 (PP1) complex that promotes RNA polymerase II transcription pause-release, allowing transcription elongation. The sequence is that of WD repeat-containing protein 82 (wdr82) from Xenopus tropicalis (Western clawed frog).